We begin with the raw amino-acid sequence, 441 residues long: Monodehydroascorbate reductase 3 (441 aa).

FAD-binding positions include G14 to A17, E41, R48, K53, I96, and R147 to E148. NAD(+) contacts are provided by residues G173–E179, E197, R203, and G262. An NADP(+)-binding site is contributed by F175 to E179. R203 and G262 together coordinate NADP(+). D299 contacts FAD. E315–H316 serves as a coordination point for NAD(+). E315–H316 is an NADP(+) binding site. L-ascorbate is bound at residue R321. Y350 is a binding site for FAD. Y350 serves as a coordination point for NAD(+). Position 350 (Y350) interacts with NADP(+). Residue R352 coordinates L-ascorbate. Position 418 is a phosphoserine (S418).

This sequence belongs to the FAD-dependent oxidoreductase family. Requires FAD as cofactor.

The protein localises to the cytoplasm. The enzyme catalyses 2 monodehydro-L-ascorbate radical + NADH + H(+) = 2 L-ascorbate + NAD(+). In terms of biological role, catalyzes the conversion of monodehydroascorbate to ascorbate, oxidizing NADH in the process. Required for producing sufficient ascorbate to maintain the interaction between Piriformospora indica and Arabidopsis in a mutualistic state. This Arabidopsis thaliana (Mouse-ear cress) protein is Monodehydroascorbate reductase 3.